We begin with the raw amino-acid sequence, 460 residues long: Argininosuccinate lyase (460 aa).

It belongs to the lyase 1 family. Argininosuccinate lyase subfamily.

It is found in the cytoplasm. It carries out the reaction 2-(N(omega)-L-arginino)succinate = fumarate + L-arginine. It participates in amino-acid biosynthesis; L-arginine biosynthesis; L-arginine from L-ornithine and carbamoyl phosphate: step 3/3. The polypeptide is Argininosuccinate lyase (Rhodopirellula baltica (strain DSM 10527 / NCIMB 13988 / SH1)).